Here is a 355-residue protein sequence, read N- to C-terminus: 3-dehydroquinate synthase (355 aa).

NAD(+) contacts are provided by residues 71 to 76, 105 to 109, 129 to 130, K142, and K151; these read EGEERK, GVVGD, and TS. Residues E184, H246, and H263 each contribute to the Zn(2+) site.

The protein belongs to the sugar phosphate cyclases superfamily. Dehydroquinate synthase family. Co(2+) is required as a cofactor. It depends on Zn(2+) as a cofactor. Requires NAD(+) as cofactor.

It localises to the cytoplasm. The enzyme catalyses 7-phospho-2-dehydro-3-deoxy-D-arabino-heptonate = 3-dehydroquinate + phosphate. Its pathway is metabolic intermediate biosynthesis; chorismate biosynthesis; chorismate from D-erythrose 4-phosphate and phosphoenolpyruvate: step 2/7. Catalyzes the conversion of 3-deoxy-D-arabino-heptulosonate 7-phosphate (DAHP) to dehydroquinate (DHQ). This is 3-dehydroquinate synthase from Streptococcus pneumoniae (strain ATCC 700669 / Spain 23F-1).